A 400-amino-acid polypeptide reads, in one-letter code: Deoxyguanosinetriphosphate triphosphohydrolase-like protein (400 aa).

One can recognise an HD domain in the interval 76-204 (RLTHTLEVAQ…VNIADPLAYC (129 aa)).

The protein belongs to the dGTPase family. Type 2 subfamily.

This chain is Deoxyguanosinetriphosphate triphosphohydrolase-like protein, found in Syntrophus aciditrophicus (strain SB).